Here is a 425-residue protein sequence, read N- to C-terminus: Histidine--tRNA ligase (425 aa).

The protein belongs to the class-II aminoacyl-tRNA synthetase family. In terms of assembly, homodimer.

The protein localises to the cytoplasm. The catalysed reaction is tRNA(His) + L-histidine + ATP = L-histidyl-tRNA(His) + AMP + diphosphate + H(+). This Listeria monocytogenes serotype 4b (strain F2365) protein is Histidine--tRNA ligase.